The chain runs to 336 residues: MGRHSFKTVSIDEFLELTLRPDLLNLIKKEHHKLMKVKLPGTIANFSRPENSSKNRSTLFPCWDESRVILKSPSKGIPYDNDITSTYIHANFVDGFKDKNKFICSQSPMENTCEDFWRMILQENCHIIVSLTKVDNAVYCYEYWANEKYREKVFGKYVIKTLEIIEEEVFTRSRLLLTDTNNDISQEIHHFWYTNFPLHYGWPIMSPELLNLIFHVDQKREELMNTTGSGPIVIHCSKIVSWTGIFCTIYNALSQVREEKTVSLPQTVLNIRKKRHSSIMNWVEYEICYRVLCEAILNLKTFMYCNLEIFSAFQDKVAAINFYFGKSHNKHSFNNK.

Residues 27–295 (IKKEHHKLMK…EICYRVLCEA (269 aa)) form the Tyrosine-protein phosphatase domain.

Belongs to the protein-tyrosine phosphatase family.

The polypeptide is Tyrosine phosphatase-like protein H1 (H1) (Microplitis demolitor (Parasitoid wasp)).